The chain runs to 963 residues: MHC class II regulatory factor RFX1 (963 aa).

Disordered regions lie at residues 1-88 (MATQ…APSP), 105-126 (ASETVSEASPSSTASQTGVPTQ), 174-218 (QSPA…GTPA), and 361-392 (SSSEAGASNSSVGAGGNGGGGSSGGGSGGSSG). Residues 20–41 (PQAPPQALPQPPPPAAPQPPAA) are compositionally biased toward pro residues. Over residues 42-67 (ATPQPQYVTELQSPQPQTQPPGSQKQ) the composition is skewed to low complexity. Phosphoserine is present on S54. The segment covering 75 to 87 (APAPSQPATPAPS) has biased composition (pro residues). Polar residues-rich tracts occupy residues 107–119 (ETVSEASPSSTAS), 181–196 (KSGQVSLTVHSAQQVH), and 204–214 (VQANNSTSKTA). Over residues 361 to 372 (SSSEAGASNSSV) the composition is skewed to low complexity. The segment covering 373-392 (GAGGNGGGGSSGGGSGGSSG) has biased composition (gly residues). Residues 423-498 (TVQWLLDNYE…YHYYGLRIKA (76 aa)) constitute a DNA-binding region (RFX-type winged-helix). Positions 899 to 948 (SLNPLDPDKDEEEEEEEESEDELPQDISLAAGSESPALGPEALEPPAKLA) are disordered. Residues 906–922 (DKDEEEEEEEESEDELP) are compositionally biased toward acidic residues. Low complexity predominate over residues 932–947 (ESPALGPEALEPPAKL). Phosphoserine is present on residues S962 and S963.

The protein belongs to the RFX family. Homodimer; binds DNA as a homodimer. Heterodimer; heterodimerizes with RFX2 and RFX3.

It is found in the nucleus. Functionally, regulatory factor essential for MHC class II genes expression. Binds to the X boxes of MHC class II genes. The chain is MHC class II regulatory factor RFX1 (Rfx1) from Mus musculus (Mouse).